Here is a 79-residue protein sequence, read N- to C-terminus: Ribonuclease P protein component 1 (79 aa).

It belongs to the eukaryotic/archaeal RNase P protein component 1 family. Consists of a catalytic RNA component and at least 4-5 protein subunits.

It is found in the cytoplasm. The enzyme catalyses Endonucleolytic cleavage of RNA, removing 5'-extranucleotides from tRNA precursor.. Functionally, part of ribonuclease P, a protein complex that generates mature tRNA molecules by cleaving their 5'-ends. The chain is Ribonuclease P protein component 1 from Saccharolobus solfataricus (strain ATCC 35092 / DSM 1617 / JCM 11322 / P2) (Sulfolobus solfataricus).